A 331-amino-acid chain; its full sequence is POU domain, class 4, transcription factor 3 (331 aa).

Residues 81 to 97 (TSSSSTVPISHPSSNLP) are compositionally biased toward low complexity. The interval 81-108 (TSSSSTVPISHPSSNLPSHHHHHLSHQT) is disordered. Residues 172–249 (DVESDPRELE…VLQAWLEEAE (78 aa)) form the POU-specific domain. Residues 267-326 (RKRKRTSIAAPEKRSLEAYFAIQPRPSSEKIAAIAEKLDLKKNVVRVWFCNQRQKQKRMK) constitute a DNA-binding region (homeobox).

The protein belongs to the POU transcription factor family. Class-4 subfamily. As to quaternary structure, interaction with ISL1. Expressed in the nervous system. Expressed in the otic vesicle during embryogenesis. Expressed in the adult retina in a subset of retinal ganglion cells (RGCs), and at a lower level in the adult tectum. Not expressed in the adult olfactory bulb.

The protein localises to the nucleus. Its subcellular location is the cytoplasm. Its function is as follows. Acts as a transcriptional activator. Acts by binding to sequences related to the consensus octamer motif 5'-ATGCAAAT-3' in the regulatory regions of its target genes. May play a role in specifying terminally differentiated neuronal phenotypes. The polypeptide is POU domain, class 4, transcription factor 3 (pou4f3) (Danio rerio (Zebrafish)).